A 467-amino-acid chain; its full sequence is Histidine--tRNA ligase (467 aa).

It belongs to the class-II aminoacyl-tRNA synthetase family. In terms of assembly, homodimer.

Its subcellular location is the cytoplasm. It carries out the reaction tRNA(His) + L-histidine + ATP = L-histidyl-tRNA(His) + AMP + diphosphate + H(+). The sequence is that of Histidine--tRNA ligase from Gloeobacter violaceus (strain ATCC 29082 / PCC 7421).